The sequence spans 439 residues: Xaa-Pro dipeptidase (439 aa).

Mn(2+) is bound by residues Asp-244, Asp-255, His-335, Glu-380, and Glu-418.

The protein belongs to the peptidase M24B family. Bacterial-type prolidase subfamily. The cofactor is Mn(2+).

The catalysed reaction is Xaa-L-Pro dipeptide + H2O = an L-alpha-amino acid + L-proline. Splits dipeptides with a prolyl residue in the C-terminal position. The chain is Xaa-Pro dipeptidase from Shewanella frigidimarina (strain NCIMB 400).